The sequence spans 137 residues: uncharacterized protein (137 aa).

A run of 2 helical transmembrane segments spans residues 26 to 42 (CSLC…FFAM) and 52 to 69 (ASIP…GSIL).

Its subcellular location is the membrane. This is an uncharacterized protein from Saccharomyces cerevisiae (strain ATCC 204508 / S288c) (Baker's yeast).